Consider the following 205-residue polypeptide: Ras-related protein Rab-1A (205 aa).

Residues 18–26 (GDSGVGKSC), 36–43 (YTESYIST), 66–70 (DTAGQ), 124–127 (NKSD), and 154–156 (SAK) contribute to the GTP site. The short motif at 40–48 (YISTIGVDF) is the Effector region element. Positions 183 to 198 (SDSKPSVKINSSTPVS) are enriched in polar residues. Positions 183-205 (SDSKPSVKINSSTPVSANKGGCC) are disordered. Residues Cys204 and Cys205 are each lipidated (S-geranylgeranyl cysteine).

Belongs to the small GTPase superfamily. Rab family.

Its subcellular location is the golgi apparatus. The protein localises to the endoplasmic reticulum. Functionally, probably required for transit of protein from the ER through Golgi compartment. The sequence is that of Ras-related protein Rab-1A (RAB1A) from Lymnaea stagnalis (Great pond snail).